The following is a 154-amino-acid chain: UPF0178 protein in pahZ1 5'region (154 aa).

It belongs to the UPF0178 family.

The chain is UPF0178 protein in pahZ1 5'region from Paucimonas lemoignei (Pseudomonas lemoignei).